The primary structure comprises 253 residues: MALSMPLNGLKEEDKEPLIELFVKAGSDGESIGNCPFSQRLFMILWLKGVVFSVSTVDLKRKPADLQNLAPGTHPPFITFNSEVKTDVNKIEEFLEEVLCPPKYLKLSPKHPESNTAGMDIFAKFSAYIKNSRPEANEALERGLLKTLQKLDEYLNSPLPDEIDENSMEDIKFSTRKFLDGDEMTLADCNLLPKLHIVKVVAKKYRNFDIPKEMTGIWRYLTNAYSRDEFTNTCPSDKEVEIAYSDVAKRLTK.

Position 2 is an N-acetylalanine (A2). A required for insertion into the membrane region spans residues A2–P101. Phosphoserine is present on S4. N6-acetyllysine is present on K24. Residues F37–V57 traverse the membrane as a helical segment. Positions N81–Y244 constitute a GST C-terminal domain. K130 carries the N6-acetyllysine modification. A phosphoserine mark is found at S132, S167, and S236. Y244 is modified (phosphotyrosine).

It belongs to the chloride channel CLIC family. As to quaternary structure, monomer. Interacts with HRH3.

Its subcellular location is the cytoplasm. The protein localises to the cytoskeleton. It is found in the microtubule organizing center. It localises to the centrosome. The protein resides in the cytoplasmic vesicle membrane. Its subcellular location is the nucleus. The protein localises to the cell membrane. It is found in the mitochondrion. It localises to the cell junction. It catalyses the reaction chloride(in) = chloride(out). The enzyme catalyses thiocyanate(in) = thiocyanate(out). The catalysed reaction is nitrate(in) = nitrate(out). It carries out the reaction iodide(out) = iodide(in). It catalyses the reaction bromide(in) = bromide(out). The enzyme catalyses fluoride(in) = fluoride(out). The catalysed reaction is choline(out) = choline(in). Functionally, in the soluble state, catalyzes glutaredoxin-like thiol disulfide exchange reactions with reduced glutathione as electron donor. Can insert into membranes and form voltage-dependent multi-ion conductive channels. Membrane insertion seems to be redox-regulated and may occur only under oxidizing conditions. Has alternate cellular functions like a potential role in angiogenesis or in maintaining apical-basolateral membrane polarity during mitosis and cytokinesis. Could also promote endothelial cell proliferation and regulate endothelial morphogenesis (tubulogenesis). Promotes cell-surface expression of HRH3. The polypeptide is Chloride intracellular channel protein 4 (CLIC4) (Pongo abelii (Sumatran orangutan)).